A 494-amino-acid polypeptide reads, in one-letter code: Probable malate:quinone oxidoreductase (494 aa).

It belongs to the MQO family. Requires FAD as cofactor.

The catalysed reaction is (S)-malate + a quinone = a quinol + oxaloacetate. Its pathway is carbohydrate metabolism; tricarboxylic acid cycle; oxaloacetate from (S)-malate (quinone route): step 1/1. The sequence is that of Probable malate:quinone oxidoreductase from Kocuria rhizophila (strain ATCC 9341 / DSM 348 / NBRC 103217 / DC2201).